A 138-amino-acid chain; its full sequence is Acidic phospholipase A2 Cvv-E6a (138 aa).

Residues 1–16 form the signal peptide; that stretch reads MRTLWIVAVLLLGVEG. Disulfide bonds link cysteine 42–cysteine 131, cysteine 44–cysteine 60, cysteine 59–cysteine 111, cysteine 65–cysteine 138, cysteine 66–cysteine 104, cysteine 73–cysteine 97, and cysteine 91–cysteine 102. Residues tyrosine 43, glycine 45, and glycine 47 each contribute to the Ca(2+) site. Residue histidine 63 is part of the active site. Aspartate 64 lines the Ca(2+) pocket. Aspartate 105 is a catalytic residue.

It belongs to the phospholipase A2 family. Group II subfamily. D49 sub-subfamily. Ca(2+) serves as cofactor. In terms of tissue distribution, expressed by the venom gland.

It localises to the secreted. The enzyme catalyses a 1,2-diacyl-sn-glycero-3-phosphocholine + H2O = a 1-acyl-sn-glycero-3-phosphocholine + a fatty acid + H(+). In terms of biological role, snake venom phospholipase A2 (PLA2) that significantly inhibits ADP-induced platelet aggregation in platelet-rich plasma of human, rabbit and guinea pig. PLA2 catalyzes the calcium-dependent hydrolysis of the 2-acyl groups in 3-sn-phosphoglycerides. The chain is Acidic phospholipase A2 Cvv-E6a from Crotalus viridis viridis (Prairie rattlesnake).